Here is a 23-residue protein sequence, read N- to C-terminus: Paralytic peptide 1 (23 aa).

Residues Cys-7 and Cys-19 are joined by a disulfide bond.

It belongs to the GBP/PSP1/paralytic peptide family. As to expression, hemolymph.

Functionally, causes rapid, rigid paralysis when injected into Lepidopteran larvae. The physiological role may be to reduce hemolymph loss following injury and promote wound healing. The chain is Paralytic peptide 1 from Heliothis virescens (Tobacco budworm moth).